A 428-amino-acid chain; its full sequence is D-amino acid dehydrogenase (428 aa).

Position 3-17 (3-17 (VVILGSGVVGVASAY)) interacts with FAD.

Belongs to the DadA oxidoreductase family. FAD is required as a cofactor.

It carries out the reaction a D-alpha-amino acid + A + H2O = a 2-oxocarboxylate + AH2 + NH4(+). The protein operates within amino-acid degradation; D-alanine degradation; NH(3) and pyruvate from D-alanine: step 1/1. In terms of biological role, oxidative deamination of D-amino acids. This is D-amino acid dehydrogenase from Burkholderia multivorans (strain ATCC 17616 / 249).